We begin with the raw amino-acid sequence, 376 residues long: Heat-inducible transcription repressor HrcA (376 aa).

This sequence belongs to the HrcA family.

Its function is as follows. Negative regulator of class I heat shock genes (grpE-dnaK-dnaJ and groELS operons). Prevents heat-shock induction of these operons. This is Heat-inducible transcription repressor HrcA from Nostoc punctiforme (strain ATCC 29133 / PCC 73102).